A 611-amino-acid polypeptide reads, in one-letter code: Pyrichalasin H cluster regulator pyiR (611 aa).

Positions cysteine 11 to cysteine 47 form a DNA-binding region, zn(2)-C6 fungal-type. Disordered stretches follow at residues leucine 53–tryptophan 128, alanine 169–threonine 192, glycine 265–serine 291, alanine 401–glutamine 427, arginine 521–arginine 550, and serine 564–glutamate 593. Positions glycine 59–threonine 69 are enriched in basic and acidic residues. The segment covering proline 98–arginine 109 has biased composition (low complexity). Polar residues predominate over residues glycine 265–glutamine 279. Residues glycine 572 to asparagine 587 show a composition bias toward gly residues.

It localises to the nucleus. Functionally, transcription factor that specifically regulates the expression of the gene cluster that mediates the biosynthesis of the mycotoxin pyrichalasin H, a tyrosine-derived cytochalasan that inhibits the growth of rice seedlings, but also inhibits lymphocyte capping and actin polymerization and alters cell morphology. Pyrichalasin H is indicated as the responsible agent for the genus-specific pathogenicity of M.grisea toward crabgrass. This is Pyrichalasin H cluster regulator pyiR from Pyricularia grisea (Crabgrass-specific blast fungus).